A 163-amino-acid polypeptide reads, in one-letter code: D-aminoacyl-tRNA deacylase (163 aa).

Residues 141 to 142 (GP) carry the Gly-cisPro motif, important for rejection of L-amino acids motif.

The protein belongs to the DTD family. In terms of assembly, homodimer.

Its subcellular location is the cytoplasm. It catalyses the reaction glycyl-tRNA(Ala) + H2O = tRNA(Ala) + glycine + H(+). The catalysed reaction is a D-aminoacyl-tRNA + H2O = a tRNA + a D-alpha-amino acid + H(+). In terms of biological role, an aminoacyl-tRNA editing enzyme that deacylates mischarged D-aminoacyl-tRNAs. Also deacylates mischarged glycyl-tRNA(Ala), protecting cells against glycine mischarging by AlaRS. Acts via tRNA-based rather than protein-based catalysis; rejects L-amino acids rather than detecting D-amino acids in the active site. By recycling D-aminoacyl-tRNA to D-amino acids and free tRNA molecules, this enzyme counteracts the toxicity associated with the formation of D-aminoacyl-tRNA entities in vivo and helps enforce protein L-homochirality. The polypeptide is D-aminoacyl-tRNA deacylase (Neisseria meningitidis serogroup B (strain ATCC BAA-335 / MC58)).